The primary structure comprises 156 residues: 6,7-dimethyl-8-ribityllumazine synthase (156 aa).

5-amino-6-(D-ribitylamino)uracil-binding positions include Phe-22, 57 to 59, and 81 to 83; these read AYE and TVI. 86-87 serves as a coordination point for (2S)-2-hydroxy-3-oxobutyl phosphate; it reads GT. His-89 (proton donor) is an active-site residue. Phe-114 lines the 5-amino-6-(D-ribitylamino)uracil pocket. Residue Arg-128 coordinates (2S)-2-hydroxy-3-oxobutyl phosphate.

Belongs to the DMRL synthase family. Forms an icosahedral capsid composed of 60 subunits, arranged as a dodecamer of pentamers.

The catalysed reaction is (2S)-2-hydroxy-3-oxobutyl phosphate + 5-amino-6-(D-ribitylamino)uracil = 6,7-dimethyl-8-(1-D-ribityl)lumazine + phosphate + 2 H2O + H(+). Its pathway is cofactor biosynthesis; riboflavin biosynthesis; riboflavin from 2-hydroxy-3-oxobutyl phosphate and 5-amino-6-(D-ribitylamino)uracil: step 1/2. Its function is as follows. Catalyzes the formation of 6,7-dimethyl-8-ribityllumazine by condensation of 5-amino-6-(D-ribitylamino)uracil with 3,4-dihydroxy-2-butanone 4-phosphate. This is the penultimate step in the biosynthesis of riboflavin. The protein is 6,7-dimethyl-8-ribityllumazine synthase of Salmonella agona (strain SL483).